The primary structure comprises 119 residues: Large ribosomal subunit protein bL19 (119 aa).

This sequence belongs to the bacterial ribosomal protein bL19 family.

In terms of biological role, this protein is located at the 30S-50S ribosomal subunit interface and may play a role in the structure and function of the aminoacyl-tRNA binding site. The polypeptide is Large ribosomal subunit protein bL19 (Treponema denticola (strain ATCC 35405 / DSM 14222 / CIP 103919 / JCM 8153 / KCTC 15104)).